Reading from the N-terminus, the 415-residue chain is Tyrosine--tRNA ligase (415 aa).

The 'HIGH' region motif lies at 54–63 (PTGSNIHLGH). The 'KMSKS' region motif lies at 248 to 252 (KMSKS). Lys251 is a binding site for ATP. Residues 351-415 (AKAFYLLSAV…GKKTFRRLTA (65 aa)) enclose the S4 RNA-binding domain.

The protein belongs to the class-I aminoacyl-tRNA synthetase family. TyrS type 2 subfamily. In terms of assembly, homodimer.

The protein resides in the cytoplasm. The enzyme catalyses tRNA(Tyr) + L-tyrosine + ATP = L-tyrosyl-tRNA(Tyr) + AMP + diphosphate + H(+). Catalyzes the attachment of tyrosine to tRNA(Tyr) in a two-step reaction: tyrosine is first activated by ATP to form Tyr-AMP and then transferred to the acceptor end of tRNA(Tyr). This Parasynechococcus marenigrum (strain WH8102) protein is Tyrosine--tRNA ligase.